The sequence spans 119 residues: Large ribosomal subunit protein bL20 (119 aa).

It belongs to the bacterial ribosomal protein bL20 family.

Functionally, binds directly to 23S ribosomal RNA and is necessary for the in vitro assembly process of the 50S ribosomal subunit. It is not involved in the protein synthesizing functions of that subunit. The sequence is that of Large ribosomal subunit protein bL20 from Coxiella burnetii (strain CbuK_Q154) (Coxiella burnetii (strain Q154)).